A 134-amino-acid polypeptide reads, in one-letter code: Fluoride-specific ion channel FluC (134 aa).

4 helical membrane-spanning segments follow: residues Leu-7–Ala-27, Gly-38–Val-58, Leu-69–Ser-89, and Val-110–His-130. 2 residues coordinate Na(+): Gly-77 and Thr-80.

It belongs to the fluoride channel Fluc/FEX (TC 1.A.43) family.

The protein resides in the cell inner membrane. It carries out the reaction fluoride(in) = fluoride(out). Its activity is regulated as follows. Na(+) is not transported, but it plays an essential structural role and its presence is essential for fluoride channel function. Fluoride-specific ion channel. Important for reducing fluoride concentration in the cell, thus reducing its toxicity. This Legionella pneumophila (strain Paris) protein is Fluoride-specific ion channel FluC.